The following is a 441-amino-acid chain: Homoserine dehydrogenase (441 aa).

NADP(+) contacts are provided by asparagine 17 and valine 18. Positions 18 and 47 each coordinate NAD(+). Residue valine 18 coordinates NADPH. Positions 49, 50, and 107 each coordinate NADP(+). Arginine 49 is a binding site for NADPH. NADPH is bound at residue lysine 107. Na(+)-binding residues include glutamate 131, valine 134, glycine 136, and isoleucine 138. NADP(+) contacts are provided by glycine 189 and glutamate 192. Residues glutamate 192 and aspartate 203 each coordinate L-homoserine. Catalysis depends on lysine 207, which acts as the Proton donor. Glycine 309 contacts NADP(+). An NAD(+)-binding site is contributed by glycine 309. Glycine 309 lines the NADPH pocket. The ACT domain occupies 356–435 (YVSMNVADKP…VVQGVTSVLR (80 aa)).

The protein belongs to the homoserine dehydrogenase family. It depends on a metal cation as a cofactor.

The enzyme catalyses L-homoserine + NADP(+) = L-aspartate 4-semialdehyde + NADPH + H(+). It catalyses the reaction L-homoserine + NAD(+) = L-aspartate 4-semialdehyde + NADH + H(+). The protein operates within amino-acid biosynthesis; L-methionine biosynthesis via de novo pathway; L-homoserine from L-aspartate: step 3/3. It participates in amino-acid biosynthesis; L-threonine biosynthesis; L-threonine from L-aspartate: step 3/5. In terms of biological role, catalyzes the conversion of L-aspartate-beta-semialdehyde (L-Asa) to L-homoserine (L-Hse), the third step in the biosynthesis of threonine and methionine from aspartate. The protein is Homoserine dehydrogenase (hom) of Mycobacterium leprae (strain TN).